The primary structure comprises 392 residues: MAMLGTALRPSATRVMLLGSGELGKEVAIECQRLGIEVIAVDRYADAPAMQVAHRSHVINMLDGAALKKLVAQEMPDFIVPEIEAIATDALVELEQQGQRVVPTARAARLTMNREGIRRLAAEELGLPTSAYRFAENEAEFREAVAEIGLPCIVKPVMSSSGKGQSFIRSEEMLESAWQYAQQGGRAGAGKVIVEGVVKFDFEITLLTISAVDGVHFCAPIGHRQEDGDYRESWQPQQMSDVALTRAQEIAQKVVEALGGYGLFGVELFVCGDEVIFSEVSPRPHDTGMVTLISQDLSEFALHVRAFLGLPVGGIRQYGPAASAVILPTLKSDDVKFGELSGALGAGLQLRLFGKPEIDGSRRLGVALATGETVDDAIARAKASAAAVIVKG.

N(1)-(5-phospho-beta-D-ribosyl)glycinamide is bound by residues 22–23 (EL) and glutamate 82. Residues arginine 114, lysine 155, 160–165 (SSGKGQ), 195–198 (EGVV), and glutamate 203 contribute to the ATP site. Residues 119–308 (RLAAEELGLP…EFALHVRAFL (190 aa)) form the ATP-grasp domain. Mg(2+) contacts are provided by glutamate 267 and glutamate 279. N(1)-(5-phospho-beta-D-ribosyl)glycinamide contacts are provided by residues aspartate 286, lysine 355, and 362-363 (RR).

The protein belongs to the PurK/PurT family. In terms of assembly, homodimer.

It catalyses the reaction N(1)-(5-phospho-beta-D-ribosyl)glycinamide + formate + ATP = N(2)-formyl-N(1)-(5-phospho-beta-D-ribosyl)glycinamide + ADP + phosphate + H(+). It participates in purine metabolism; IMP biosynthesis via de novo pathway; N(2)-formyl-N(1)-(5-phospho-D-ribosyl)glycinamide from N(1)-(5-phospho-D-ribosyl)glycinamide (formate route): step 1/1. Functionally, involved in the de novo purine biosynthesis. Catalyzes the transfer of formate to 5-phospho-ribosyl-glycinamide (GAR), producing 5-phospho-ribosyl-N-formylglycinamide (FGAR). Formate is provided by PurU via hydrolysis of 10-formyl-tetrahydrofolate. The sequence is that of Formate-dependent phosphoribosylglycinamide formyltransferase from Cronobacter sakazakii (strain ATCC BAA-894) (Enterobacter sakazakii).